The sequence spans 397 residues: S-adenosylmethionine synthase (397 aa).

Residue H17 participates in ATP binding. D19 serves as a coordination point for Mg(2+). K(+) is bound at residue E45. The L-methionine site is built by E58 and Q101. The tract at residues 101-111 (QSPDIAQGVDK) is flexible loop. ATP is bound by residues 176–178 (DGK), 243–244 (RF), D252, 258–259 (RK), and K279. D252 is an L-methionine binding site. Residue K283 coordinates L-methionine.

This sequence belongs to the AdoMet synthase family. As to quaternary structure, homotetramer; dimer of dimers. Mg(2+) serves as cofactor. K(+) is required as a cofactor.

Its subcellular location is the cytoplasm. It carries out the reaction L-methionine + ATP + H2O = S-adenosyl-L-methionine + phosphate + diphosphate. It functions in the pathway amino-acid biosynthesis; S-adenosyl-L-methionine biosynthesis; S-adenosyl-L-methionine from L-methionine: step 1/1. In terms of biological role, catalyzes the formation of S-adenosylmethionine (AdoMet) from methionine and ATP. The overall synthetic reaction is composed of two sequential steps, AdoMet formation and the subsequent tripolyphosphate hydrolysis which occurs prior to release of AdoMet from the enzyme. In Staphylococcus aureus (strain MRSA252), this protein is S-adenosylmethionine synthase.